Consider the following 251-residue polypeptide: Triosephosphate isomerase (251 aa).

Asn-9–Lys-11 is a substrate binding site. Residue His-94 is the Electrophile of the active site. The Proton acceptor role is filled by Glu-166. Residues Gly-172, Ser-211, and Gly-232–Gly-233 each bind substrate.

It belongs to the triosephosphate isomerase family. In terms of assembly, homodimer.

The protein localises to the cytoplasm. It carries out the reaction D-glyceraldehyde 3-phosphate = dihydroxyacetone phosphate. It functions in the pathway carbohydrate biosynthesis; gluconeogenesis. The protein operates within carbohydrate degradation; glycolysis; D-glyceraldehyde 3-phosphate from glycerone phosphate: step 1/1. In terms of biological role, involved in the gluconeogenesis. Catalyzes stereospecifically the conversion of dihydroxyacetone phosphate (DHAP) to D-glyceraldehyde-3-phosphate (G3P). In Stenotrophomonas maltophilia (strain R551-3), this protein is Triosephosphate isomerase.